The following is a 628-amino-acid chain: Basal cell adhesion molecule (628 aa).

An N-terminal signal peptide occupies residues 1 to 31 (MEPPDAPAQARGAPRLLLLAVLLAAHPDAQA). 2 consecutive Ig-like V-type domains span residues 32–142 (EVRL…ARLN) and 147–257 (PEAT…PTFH). Residues 32–547 (EVRLSVPPLV…GTVSPQTSQA (516 aa)) lie on the Extracellular side of the membrane. Cystine bridges form between cysteine 53-cysteine 125, cysteine 172-cysteine 237, and cysteine 291-cysteine 337. 3 Ig-like C2-type domains span residues 274 to 355 (PSTP…KTLE), 363 to 441 (PLEL…QNFT), and 448 to 541 (PELK…GTVS). The segment at 309–312 (EQEE) is interaction with laminin alpha5. Residues asparagine 321, asparagine 377, asparagine 383, asparagine 419, and asparagine 439 are each glycosylated (N-linked (GlcNAc...) asparagine). Cysteines 384 and 424 form a disulfide. An intrachain disulfide couples cysteine 473 to cysteine 522. A helical membrane pass occupies residues 548–568 (GVAVMAVAVSVGLLLLVVAVF). Over 569 to 628 (YCVRRKGGPCCRQRREKGAPPPGEPGLSHSGSEQPEQTGLLMGGASGGARGGSGGFGDEC) the chain is Cytoplasmic. The interval 579 to 628 (CRQRREKGAPPPGEPGLSHSGSEQPEQTGLLMGGASGGARGGSGGFGDEC) is disordered. Serine 596 carries the phosphoserine; by GSK3 modification. A Phosphoserine; by CK2 modification is found at serine 598. Serine 600 is modified (phosphoserine). Positions 609 to 628 (LMGGASGGARGGSGGFGDEC) are enriched in gly residues. Serine 621 bears the Phosphoserine; by PKA or PKB/AKT1 mark.

In terms of assembly, homodimer. Interacts with ITGA4:ITGB1. Interacts with spectrins SPTA1 and SPTB1. Post-translationally, epinephrine-stimulated phosphorylation of Ser-621 by PKA enhances adhesion to laminin. Ser-621 can also be phosphorylated by AKT1. In terms of tissue distribution, wide tissue distribution (highest in the pancreas and very low in brain). Closely associated with the basal layer of cells in epithelia and the endothelium of blood vessel walls.

The protein localises to the cell membrane. Transmembrane glycoprotein that functions as both a receptor and an adhesion molecule playing a crucial role in cell adhesion, motility, migration and invasion. Extracellular domain enables binding to extracellular matrix proteins, such as laminin, integrin and other ligands while its intracellular domain interacts with cytoskeletal proteins like hemoglobin, facilitating cell signal transduction. Serves as a receptor for laminin alpha-5/LAMA5 to promote cell adhesion. Mechanistically, JAK2 induces BCAM phosphorylation and activates its adhesion to laminin by stimulating a Rap1/AKT signaling pathway in the absence of EPOR. This is Basal cell adhesion molecule (BCAM) from Homo sapiens (Human).